Consider the following 336-residue polypeptide: Fructose-1,6-bisphosphatase class 1 (336 aa).

Mg(2+) is bound by residues Glu90, Asp112, Leu114, and Asp115. Substrate is bound by residues 115–118 (DGSS), Asn211, and Lys277. Glu283 serves as a coordination point for Mg(2+).

This sequence belongs to the FBPase class 1 family. Homotetramer. Requires Mg(2+) as cofactor.

It localises to the cytoplasm. It carries out the reaction beta-D-fructose 1,6-bisphosphate + H2O = beta-D-fructose 6-phosphate + phosphate. It functions in the pathway carbohydrate biosynthesis; gluconeogenesis. The sequence is that of Fructose-1,6-bisphosphatase class 1 from Pseudomonas fluorescens (strain ATCC BAA-477 / NRRL B-23932 / Pf-5).